The following is a 64-amino-acid chain: Prokaryotic ubiquitin-like protein Pup (64 aa).

Residues 20–58 (QELTLAASHVVSDVSEVDDLLDEIDGLLAENAEDFVTGF) form an ARC ATPase binding region. Glu64 participates in a covalent cross-link: Isoglutamyl lysine isopeptide (Glu-Lys) (interchain with K-? in acceptor proteins).

Belongs to the prokaryotic ubiquitin-like protein family. As to quaternary structure, strongly interacts with the proteasome-associated ATPase ARC through a hydrophobic interface; the interacting region of Pup lies in its C-terminal half. There is one Pup binding site per ARC hexamer ring.

It participates in protein degradation; proteasomal Pup-dependent pathway. In terms of biological role, protein modifier that is covalently attached to lysine residues of substrate proteins, thereby targeting them for proteasomal degradation. The tagging system is termed pupylation. The polypeptide is Prokaryotic ubiquitin-like protein Pup (Rothia mucilaginosa (strain DY-18) (Stomatococcus mucilaginosus)).